A 237-amino-acid polypeptide reads, in one-letter code: MTPQDFYRTLEEDGFSLSSKQKEQFDTYFKLLVEWNTKINLTAITEENEVYPQHFYDSIAPILQAFLANEPIKLLDIGAGAGFPSLPMKILFPNLEVTIIDSLNKRISFLTLLAQELGLENVHFFHGRAEDFGQDKAFRGQFDVVTARAVARMQVLSELTIPFLKIGGKLIALKAQAADQELEEAKNALCLLFGKVIKNHSYQLPNGDSRFITIVEKKKETPNKYPRKAGLPNKKPL.

Residues G78, F83, 129–130 (AE), and R148 contribute to the S-adenosyl-L-methionine site.

Belongs to the methyltransferase superfamily. RNA methyltransferase RsmG family.

It is found in the cytoplasm. Specifically methylates the N7 position of a guanine in 16S rRNA. The protein is Ribosomal RNA small subunit methyltransferase G of Streptococcus pyogenes serotype M12 (strain MGAS9429).